Consider the following 1030-residue polypeptide: MMS19 nucleotide excision repair protein homolog (1030 aa).

Ala2 bears the N-acetylalanine mark. The residue at position 496 (Lys496) is an N6-acetyllysine. HEAT repeat units follow at residues 866 to 904 (QRFFTDNVPALVQGFHAAPQDVKPNYLKGLSHVLNRLPK), 908 to 946 (LPELPTLLSLLLEALSCPDCVVQLSTLSCLQPLLLEAPQ), 949 to 987 (SLHVDTLVTKFLNLSSSPSMAVRIAALQCMHALTRLPTP), and 990 to 1028 (LPYKPQVIRALAKPLDDKKRLVRKEAVSARGEWFLLGSP). A Phosphoserine modification is found at Ser1027.

Belongs to the MET18/MMS19 family. Component of the CIA complex. In the CIA complex, interacts directly with CIAO2B and CIAO3. Component of the MMXD complex, composed of CIAO1, ERCC2, CIAO2B, MMS19 and SLC25A5. Interacts with CIAO2B; the interaction is direct. Interacts with ERCC2/XPD; the interaction is direct. Interacts with ERCC3/XPB and NCOA3/RAC3. Interacts with RTEL1; the interaction mediates the association of RTEL1 with the CIA complex. Interacts with BRIP1. Interacts with KIF4A; the interaction facilitates the transfer of Fe-S clusters to KIF4A to ensure proper localization of KIF4A to the mitotic machinery components. Interacts with CCDC117; the interaction is indirect. In terms of processing, ubiquitinated; undergoes 'Lys-48'-linked polyubiquitination by MAGEF1-NSMCE1 ubiquitin ligase complex leading to proteasomal degradation. As to expression, ubiquitously expressed with higher expression in testis.

The protein localises to the nucleus. It localises to the cytoplasm. Its subcellular location is the cytoskeleton. The protein resides in the spindle. It is found in the microtubule organizing center. The protein localises to the centrosome. In terms of biological role, key component of the cytosolic iron-sulfur protein assembly (CIA) complex, a multiprotein complex that mediates the incorporation of iron-sulfur cluster into apoproteins specifically involved in DNA metabolism and genomic integrity. In the CIA complex, MMS19 acts as an adapter between early-acting CIA components and a subset of cellular target iron-sulfur proteins such as ERCC2/XPD, FANCJ and RTEL1, thereby playing a key role in nucleotide excision repair (NER), homologous recombination-mediated double-strand break DNA repair, DNA replication and RNA polymerase II (POL II) transcription. As part of the mitotic spindle-associated MMXD complex, plays a role in chromosome segregation, probably by facilitating iron-sulfur (Fe-S) cluster assembly into ERCC2/XPD. Together with CIAO2, facilitates the transfer of Fe-S clusters to the motor protein KIF4A, which ensures proper localization of KIF4A to mitotic machinery components to promote the progression of mitosis. Indirectly acts as a transcriptional coactivator of estrogen receptor (ER), via its role in iron-sulfur insertion into some component of the TFIIH-machinery. In Homo sapiens (Human), this protein is MMS19 nucleotide excision repair protein homolog.